Here is a 168-residue protein sequence, read N- to C-terminus: Plastocyanin, chloroplastic (168 aa).

The N-terminal 70 residues, 1-70 (MASVAAAAVS…SSLLLVASAN (70 aa)), are a transit peptide targeting the chloroplast. Positions 71–168 (AATVKMGGDD…AGMKGVVTVS (98 aa)) constitute a Plastocyanin-like domain. Residues His108, Cys153, His156, and Met161 each contribute to the Cu cation site.

It belongs to the plastocyanin family. Cu(2+) is required as a cofactor.

The protein resides in the plastid. It is found in the chloroplast thylakoid membrane. Participates in electron transfer between P700 and the cytochrome b6-f complex in photosystem I. This chain is Plastocyanin, chloroplastic (PETE), found in Physcomitrium patens (Spreading-leaved earth moss).